The primary structure comprises 417 residues: Gamma-glutamyl phosphate reductase (417 aa).

The protein belongs to the gamma-glutamyl phosphate reductase family.

Its subcellular location is the cytoplasm. It carries out the reaction L-glutamate 5-semialdehyde + phosphate + NADP(+) = L-glutamyl 5-phosphate + NADPH + H(+). The protein operates within amino-acid biosynthesis; L-proline biosynthesis; L-glutamate 5-semialdehyde from L-glutamate: step 2/2. Functionally, catalyzes the NADPH-dependent reduction of L-glutamate 5-phosphate into L-glutamate 5-semialdehyde and phosphate. The product spontaneously undergoes cyclization to form 1-pyrroline-5-carboxylate. This is Gamma-glutamyl phosphate reductase from Pectobacterium carotovorum subsp. carotovorum (strain PC1).